Consider the following 226-residue polypeptide: ATP synthase F(0) complex subunit a (226 aa).

6 helical membrane-spanning segments follow: residues 12-32 (PTMM…ILFP), 68-88 (WALM…LGLL), 97-117 (QLSM…ITGF), 138-158 (IPML…ALAV), 164-184 (ITAG…LMDI), and 189-209 (AFIT…VALI).

This sequence belongs to the ATPase A chain family. Component of the ATP synthase complex composed at least of ATP5F1A/subunit alpha, ATP5F1B/subunit beta, ATP5MC1/subunit c (homooctomer), MT-ATP6/subunit a, MT-ATP8/subunit 8, ATP5ME/subunit e, ATP5MF/subunit f, ATP5MG/subunit g, ATP5MK/subunit k, ATP5MJ/subunit j, ATP5F1C/subunit gamma, ATP5F1D/subunit delta, ATP5F1E/subunit epsilon, ATP5PF/subunit F6, ATP5PB/subunit b, ATP5PD/subunit d, ATP5PO/subunit OSCP. ATP synthase complex consists of a soluble F(1) head domain (subunits alpha(3) and beta(3)) - the catalytic core - and a membrane F(0) domain - the membrane proton channel (subunits c, a, 8, e, f, g, k and j). These two domains are linked by a central stalk (subunits gamma, delta, and epsilon) rotating inside the F1 region and a stationary peripheral stalk (subunits F6, b, d, and OSCP). Interacts with DNAJC30; interaction is direct.

The protein resides in the mitochondrion inner membrane. The enzyme catalyses H(+)(in) = H(+)(out). Its function is as follows. Subunit a, of the mitochondrial membrane ATP synthase complex (F(1)F(0) ATP synthase or Complex V) that produces ATP from ADP in the presence of a proton gradient across the membrane which is generated by electron transport complexes of the respiratory chain. ATP synthase complex consist of a soluble F(1) head domain - the catalytic core - and a membrane F(1) domain - the membrane proton channel. These two domains are linked by a central stalk rotating inside the F(1) region and a stationary peripheral stalk. During catalysis, ATP synthesis in the catalytic domain of F(1) is coupled via a rotary mechanism of the central stalk subunits to proton translocation. With the subunit c (ATP5MC1), forms the proton-conducting channel in the F(0) domain, that contains two crucial half-channels (inlet and outlet) that facilitate proton movement from the mitochondrial intermembrane space (IMS) into the matrix. Protons are taken up via the inlet half-channel and released through the outlet half-channel, following a Grotthuss mechanism. The chain is ATP synthase F(0) complex subunit a from Phoca vitulina (Harbor seal).